Consider the following 146-residue polypeptide: Small ribosomal subunit protein uS5 (146 aa).

Positions 8-71 constitute an S5 DRBM domain; that stretch reads FEEVIVNIGR…DDAFKNIIDV (64 aa).

It belongs to the universal ribosomal protein uS5 family. As to quaternary structure, part of the 30S ribosomal subunit. Contacts proteins S4 and S8.

Functionally, with S4 and S12 plays an important role in translational accuracy. Its function is as follows. Located at the back of the 30S subunit body where it stabilizes the conformation of the head with respect to the body. This Campylobacter hominis (strain ATCC BAA-381 / DSM 21671 / CCUG 45161 / LMG 19568 / NCTC 13146 / CH001A) protein is Small ribosomal subunit protein uS5.